Here is a 212-residue protein sequence, read N- to C-terminus: Probable U3 small nucleolar RNA-associated protein 11 (212 aa).

Belongs to the UTP11 family. As to quaternary structure, component of the ribosomal small subunit (SSU) processome.

It localises to the nucleus. The protein localises to the nucleolus. Its function is as follows. Involved in nucleolar processing of pre-18S ribosomal RNA. The protein is Probable U3 small nucleolar RNA-associated protein 11 of Plasmodium falciparum (isolate 3D7).